Here is a 473-residue protein sequence, read N- to C-terminus: Siroheme synthase 1 (473 aa).

A precorrin-2 dehydrogenase /sirohydrochlorin ferrochelatase region spans residues 1–204 (MDYFPIFCQL…NDHVQADQHV (204 aa)). NAD(+)-binding positions include 22 to 23 (EI) and 43 to 44 (CE). The residue at position 128 (serine 128) is a Phosphoserine. The tract at residues 216 to 473 (GEVVLVGAGP…KVTECVAHVG (258 aa)) is uroporphyrinogen-III C-methyltransferase. Position 225 (proline 225) interacts with S-adenosyl-L-methionine. Aspartate 248 (proton acceptor) is an active-site residue. Lysine 270 acts as the Proton donor in catalysis. Residues 301 to 303 (GGD), isoleucine 306, 331 to 332 (TA), methionine 382, and glycine 411 each bind S-adenosyl-L-methionine.

The protein in the N-terminal section; belongs to the precorrin-2 dehydrogenase / sirohydrochlorin ferrochelatase family. It in the C-terminal section; belongs to the precorrin methyltransferase family.

The catalysed reaction is uroporphyrinogen III + 2 S-adenosyl-L-methionine = precorrin-2 + 2 S-adenosyl-L-homocysteine + H(+). The enzyme catalyses precorrin-2 + NAD(+) = sirohydrochlorin + NADH + 2 H(+). It catalyses the reaction siroheme + 2 H(+) = sirohydrochlorin + Fe(2+). Its pathway is cofactor biosynthesis; adenosylcobalamin biosynthesis; precorrin-2 from uroporphyrinogen III: step 1/1. The protein operates within cofactor biosynthesis; adenosylcobalamin biosynthesis; sirohydrochlorin from precorrin-2: step 1/1. It functions in the pathway porphyrin-containing compound metabolism; siroheme biosynthesis; precorrin-2 from uroporphyrinogen III: step 1/1. It participates in porphyrin-containing compound metabolism; siroheme biosynthesis; siroheme from sirohydrochlorin: step 1/1. Its pathway is porphyrin-containing compound metabolism; siroheme biosynthesis; sirohydrochlorin from precorrin-2: step 1/1. In terms of biological role, multifunctional enzyme that catalyzes the SAM-dependent methylations of uroporphyrinogen III at position C-2 and C-7 to form precorrin-2 via precorrin-1. Then it catalyzes the NAD-dependent ring dehydrogenation of precorrin-2 to yield sirohydrochlorin. Finally, it catalyzes the ferrochelation of sirohydrochlorin to yield siroheme. The polypeptide is Siroheme synthase 1 (Yersinia pestis (strain Pestoides F)).